Reading from the N-terminus, the 197-residue chain is Protein FAM219B (197 aa).

Disordered regions lie at residues 1–77 and 117–142; these read MATE…HRDH and DENL…YSSA. Phosphoserine is present on residues S14, S125, and S127.

Belongs to the FAM219 family.

The protein is Protein FAM219B (Fam219b) of Mus musculus (Mouse).